The primary structure comprises 367 residues: Phospho-N-acetylmuramoyl-pentapeptide-transferase (367 aa).

10 helical membrane-spanning segments follow: residues 28 to 48 (GALMTAMLIAFVFGKPMIGWL), 75 to 95 (TMGGFLILLGVMVGTLLWADL), 96 to 116 (TNAYVWIVIFVTAGFGVIGFI), 134 to 154 (FKLVGEFAIALIAVVWATHTA), 175 to 195 (LMINIGPLFFVFGCVVIVGSG), 206 to 226 (GLAIVPVMIAAATFGVIAYVV), 243 to 263 (AGEILIFCGALIGAGIGFLWW), 271 to 291 (FMGDTGSLSLGGALGTIAVAI), 295 to 315 (LVLAIVGGLFVLELVSVMVQV), and 344 to 364 (TIVIRFWIIAVILALIGLATL).

The protein belongs to the glycosyltransferase 4 family. MraY subfamily. Requires Mg(2+) as cofactor.

The protein localises to the cell inner membrane. The enzyme catalyses UDP-N-acetyl-alpha-D-muramoyl-L-alanyl-gamma-D-glutamyl-meso-2,6-diaminopimeloyl-D-alanyl-D-alanine + di-trans,octa-cis-undecaprenyl phosphate = di-trans,octa-cis-undecaprenyl diphospho-N-acetyl-alpha-D-muramoyl-L-alanyl-D-glutamyl-meso-2,6-diaminopimeloyl-D-alanyl-D-alanine + UMP. It participates in cell wall biogenesis; peptidoglycan biosynthesis. In terms of biological role, catalyzes the initial step of the lipid cycle reactions in the biosynthesis of the cell wall peptidoglycan: transfers peptidoglycan precursor phospho-MurNAc-pentapeptide from UDP-MurNAc-pentapeptide onto the lipid carrier undecaprenyl phosphate, yielding undecaprenyl-pyrophosphoryl-MurNAc-pentapeptide, known as lipid I. The chain is Phospho-N-acetylmuramoyl-pentapeptide-transferase from Maricaulis maris (strain MCS10) (Caulobacter maris).